A 386-amino-acid polypeptide reads, in one-letter code: Leupaxin (386 aa).

N-acetylmethionine is present on methionine 1. An LD motif 1 motif is present at residues 3–15; it reads ELDALLEELERCT. A Phosphoserine modification is found at serine 19. The segment at 19–52 is disordered; that stretch reads SEEYSNPVSCHLDQQSTEESKIPQTPKTLSSQGN. At tyrosine 22 the chain carries Phosphotyrosine. The span at 22–52 shows a compositional bias: polar residues; the sequence is YSNPVSCHLDQQSTEESKIPQTPKTLSSQGN. A Phosphoserine modification is found at serine 54. Tyrosine 62 is subject to Phosphotyrosine. Short sequence motifs (LD motif) lie at residues 70 to 82 and 92 to 103; these read NVYS…KESV and QLDELMAHLSEM. At tyrosine 72 the chain carries Phosphotyrosine; by LYN. Serine 81 carries the post-translational modification Phosphoserine. LIM zinc-binding domains lie at 150–208, 209–267, 268–326, and 327–386; these read GYCA…RLFS, PRCA…AMFS, PKCG…HRRG, and TLCH…LFSQ.

It belongs to the paxillin family. Interacts with unphosphorylated ITGA4. Interacts with AR and SRF. Interacts with PTK2B/PYK2, PTPN22 and PTPN12. Interacts (via LD motif 3) with LYN and the interaction is induced upon B-cell antigen receptor (BCR) activation. Interacts (via LD motif 3) with PTK2/FAK. Phosphorylated on tyrosine residues. Phosphorylation on Tyr-72 is important for its inhibitory function. Bombesin stimulates phosphorylation on Tyr-22, Tyr-62 and Tyr-72. As to expression, expressed in osteoclasts (at protein level). Highly expressed in vascular smooth muscle.

The protein resides in the cytoplasm. The protein localises to the cell junction. It is found in the focal adhesion. Its subcellular location is the nucleus. It localises to the perinuclear region. The protein resides in the cell projection. The protein localises to the podosome. It is found in the cell membrane. Transcriptional coactivator for androgen receptor (AR) and serum response factor (SRF). Contributes to the regulation of cell adhesion, spreading and cell migration and acts as a negative regulator in integrin-mediated cell adhesion events. Suppresses the integrin-induced tyrosine phosphorylation of paxillin (PXN). May play a critical role as an adapter protein in the formation of the adhesion zone in osteoclasts. Negatively regulates B-cell antigen receptor (BCR) signaling. The sequence is that of Leupaxin (Lpxn) from Mus musculus (Mouse).